The primary structure comprises 2399 residues: Norsolorinic acid synthase (2399 aa).

The interval 10 to 247 (LVFGDQTYDF…RQIPIYVPAH (238 aa)) is starter unit:ACP transacylase (SAT) domain. Residues 372 to 805 (KSKLAIVSMS…GGNTALLIED (434 aa)) form the Ketosynthase family 3 (KS3) domain. Catalysis depends on for beta-ketoacyl synthase activity residues cysteine 544, histidine 679, and histidine 722. The malonyl-CoA:ACP transacylase (MAT) domain stretch occupies residues 905–1192 (FAFTGQGSQY…LCGMIKNILG (288 aa)). Serine 995 (for acyl/malonyl transferase activity) is an active-site residue. The tract at residues 1307–1327 (VQEAPAAKTETKKMSKLDPTK) is disordered. Residues 1315–1327 (TETKKMSKLDPTK) are compositionally biased toward basic and acidic residues. The interval 1340 to 1483 (HKVIEEKTEP…CTVRFTTDSQ (144 aa)) is N-terminal hotdog fold. In terms of domain architecture, PKS/mFAS DH spans 1340-1658 (HKVIEEKTEP…LRSVPRKALR (319 aa)). The product template (PT) domain stretch occupies residues 1353–1658 (QFTVETDISR…LRSVPRKALR (306 aa)). Catalysis depends on histidine 1372, which acts as the Proton acceptor; for dehydratase activity. Residues 1510–1658 (LTHYNTKSGY…LRSVPRKALR (149 aa)) are C-terminal hotdog fold. The active-site Proton donor; for dehydratase activity is the aspartate 1570. Residues 1665–1734 (MDKGIRQRGG…AALKASVPKA (70 aa)) form a disordered region. Positions 1677-1698 (GAAKGAVAAPAPAKKMVEPVKA) are enriched in low complexity. The span at 1708-1723 (AAPPSPSKAAPPPAPK) shows a compositional bias: pro residues. Residues 1724–1734 (PAALKASVPKA) are compositionally biased toward low complexity. 3 consecutive Carrier domains span residues 1733–1812 (KADP…AGAA), 1877–1953 (SKVF…GGSG), and 2020–2099 (VART…TGSS). Serine 1770, serine 1911, and serine 2057 each carry O-(pantetheine 4'-phosphoryl)serine. A compositionally biased stretch (low complexity) spans 2098-2115 (SSADSDSSSVASNPADPA). The disordered stretch occupies residues 2098-2149 (SSADSDSSSVASNPADPAATPPRSESSDTEPDDEAPSKPKSGPGSTDSCRST). Over residues 2140–2149 (PGSTDSCRST) the composition is skewed to polar residues. The interval 2164-2393 (TLFLLPDGGG…KARVNYVSDL (230 aa)) is thioesterase/Claisen cyclase (TE/CLC) domain. Serine 2234 (for thioesterase activity) is an active-site residue.

Pantetheine 4'-phosphate is required as a cofactor.

The catalysed reaction is hexanoyl-[ACP] + 7 malonyl-CoA + 6 H(+) = noranthrone + holo-[ACP] + 7 CO2 + 7 CoA + 2 H2O. Its pathway is mycotoxin biosynthesis. Its function is as follows. Polyketide synthase; part of the fragmented gene cluster that mediates the biosynthesis of dothistromin (DOTH), a polyketide toxin very similar in structure to the aflatoxin precursor, versicolorin B. The first step of the pathway is the conversion of acetate to norsolorinic acid (NOR) and requires the fatty acid synthase subunits hexA and hexB, as well as the polyketide synthase pksA. PksA combines a hexanoyl starter unit and 7 malonyl-CoA extender units to synthesize the precursor NOR. The hexanoyl starter unit is provided to the acyl-carrier protein (ACP) domain by the fungal fatty acid synthase hexA/hexB. The second step is the conversion of NOR to averantin (AVN) and requires the norsolorinic acid ketoreductase nor1, which catalyzes the dehydration of norsolorinic acid to form (1'S)-averantin. The cytochrome P450 monooxygenase avnA then catalyzes the hydroxylation of AVN to 5'hydroxyaverantin (HAVN). The next step is performed by adhA that transforms HAVN to averufin (AVF). Averufin might then be converted to hydroxyversicolorone by cypX and avfA. Hydroxyversicolorone is further converted versiconal hemiacetal acetate (VHA) by moxY. VHA is then the substrate for the versiconal hemiacetal acetate esterase est1 to yield versiconal (VAL). Versicolorin B synthase vbsA then converts VAL to versicolorin B (VERB) by closing the bisfuran ring. Then, the activity of the versicolorin B desaturase verB leads to versicolorin A (VERA). DotB, a predicted chloroperoxidase, may perform epoxidation of the A-ring of VERA. Alternatively, a cytochrome P450, such as cypX or avnA could catalyze this step. It is also possible that another, uncharacterized, cytochrome P450 enzyme is responsible for this step. Opening of the epoxide could potentially be achieved by the epoxide hydrolase epoA. However, epoA seems not to be required for DOTH biosynthesis, but other epoxide hydrolases may have the ability to complement this hydrolysis. Alternatively, opening of the epoxide ring could be achieved non-enzymatically. The next step is the deoxygenation of ring A to yield the 5,8-dihydroxyanthraquinone which is most likely catalyzed by the NADPH dehydrogenase encoded by ver1. The last stages of DOTH biosynthesis are proposed to involve hydroxylation of the bisfuran. OrdB and norB might have oxidative roles here. An alternative possibility is that cytochrome P450 monoogenases such as avnA and cypX might perform these steps in addition to previously proposed steps. The polypeptide is Norsolorinic acid synthase (Dothistroma septosporum (Red band needle blight fungus)).